The primary structure comprises 169 residues: UPF0303 protein Oant_1766 (169 aa).

It belongs to the UPF0303 family.

The polypeptide is UPF0303 protein Oant_1766 (Brucella anthropi (strain ATCC 49188 / DSM 6882 / CCUG 24695 / JCM 21032 / LMG 3331 / NBRC 15819 / NCTC 12168 / Alc 37) (Ochrobactrum anthropi)).